The primary structure comprises 434 residues: Cobyrinate a,c-diamide synthase (434 aa).

The GATase cobBQ-type domain occupies 240-430 (KAYVAYDSAF…SHFHFSRTRR (191 aa)). The active-site Nucleophile is C322.

The protein belongs to the CobB/CbiA family. The cofactor is Mg(2+).

The enzyme catalyses cob(II)yrinate + 2 L-glutamine + 2 ATP + 2 H2O = cob(II)yrinate a,c diamide + 2 L-glutamate + 2 ADP + 2 phosphate + 2 H(+). It participates in cofactor biosynthesis; adenosylcobalamin biosynthesis; cob(II)yrinate a,c-diamide from sirohydrochlorin (anaerobic route): step 10/10. Catalyzes the ATP-dependent amidation of the two carboxylate groups at positions a and c of cobyrinate, using either L-glutamine or ammonia as the nitrogen source. The chain is Cobyrinate a,c-diamide synthase from Sulfolobus acidocaldarius (strain ATCC 33909 / DSM 639 / JCM 8929 / NBRC 15157 / NCIMB 11770).